We begin with the raw amino-acid sequence, 132 residues long: Sec-independent protein translocase protein TatB (132 aa).

A helical transmembrane segment spans residues 2–22 (FDGIGFMELLLIGILGLVVLG). Polar residues-rich tracts occupy residues 86–95 (LKQAAQSVNR) and 116–132 (IAETPTQSGDTHSKNNG). The disordered stretch occupies residues 86 to 132 (LKQAAQSVNRPYQLDESNEQEPKIAPPQANIAETPTQSGDTHSKNNG).

This sequence belongs to the TatB family. As to quaternary structure, the Tat system comprises two distinct complexes: a TatABC complex, containing multiple copies of TatA, TatB and TatC subunits, and a separate TatA complex, containing only TatA subunits. Substrates initially bind to the TatABC complex, which probably triggers association of the separate TatA complex to form the active translocon.

The protein localises to the cell inner membrane. Its function is as follows. Part of the twin-arginine translocation (Tat) system that transports large folded proteins containing a characteristic twin-arginine motif in their signal peptide across membranes. Together with TatC, TatB is part of a receptor directly interacting with Tat signal peptides. TatB may form an oligomeric binding site that transiently accommodates folded Tat precursor proteins before their translocation. This chain is Sec-independent protein translocase protein TatB, found in Shewanella denitrificans (strain OS217 / ATCC BAA-1090 / DSM 15013).